The sequence spans 398 residues: Carbamoyl phosphate synthase small chain (398 aa).

Residues 1-204 form a CPSase region; that stretch reads MSPLLPSFPP…PAYGTLDTGK (204 aa). The L-glutamine site is built by S53, G256, and G258. Residues 208–395 form the Glutamine amidotransferase type-1 domain; sequence KVVAYDFGVK…VELMNAASKK (188 aa). Catalysis depends on C284, which acts as the Nucleophile. L285, Q288, N326, G328, and F329 together coordinate L-glutamine. Active-site residues include H368 and E370.

Belongs to the CarA family. As to quaternary structure, composed of two chains; the small (or glutamine) chain promotes the hydrolysis of glutamine to ammonia, which is used by the large (or ammonia) chain to synthesize carbamoyl phosphate. Tetramer of heterodimers (alpha,beta)4.

The catalysed reaction is hydrogencarbonate + L-glutamine + 2 ATP + H2O = carbamoyl phosphate + L-glutamate + 2 ADP + phosphate + 2 H(+). It catalyses the reaction L-glutamine + H2O = L-glutamate + NH4(+). The protein operates within amino-acid biosynthesis; L-arginine biosynthesis; carbamoyl phosphate from bicarbonate: step 1/1. It functions in the pathway pyrimidine metabolism; UMP biosynthesis via de novo pathway; (S)-dihydroorotate from bicarbonate: step 1/3. Its function is as follows. Small subunit of the glutamine-dependent carbamoyl phosphate synthetase (CPSase). CPSase catalyzes the formation of carbamoyl phosphate from the ammonia moiety of glutamine, carbonate, and phosphate donated by ATP, constituting the first step of 2 biosynthetic pathways, one leading to arginine and/or urea and the other to pyrimidine nucleotides. The small subunit (glutamine amidotransferase) binds and cleaves glutamine to supply the large subunit with the substrate ammonia. This is Carbamoyl phosphate synthase small chain from Polynucleobacter necessarius subsp. necessarius (strain STIR1).